Consider the following 509-residue polypeptide: Maturase K (509 aa).

This sequence belongs to the intron maturase 2 family. MatK subfamily.

Its subcellular location is the plastid. The protein localises to the chloroplast. Usually encoded in the trnK tRNA gene intron. Probably assists in splicing its own and other chloroplast group II introns. This Arpophyllum giganteum (Hyacinth orchid) protein is Maturase K.